The following is a 40-amino-acid chain: Large ribosomal subunit protein bL36 (40 aa).

Belongs to the bacterial ribosomal protein bL36 family.

This is Large ribosomal subunit protein bL36 from Corynebacterium diphtheriae (strain ATCC 700971 / NCTC 13129 / Biotype gravis).